Reading from the N-terminus, the 195-residue chain is FMN-dependent NADH:quinone oxidoreductase 2 (195 aa).

Residues 16 to 18 and 85 to 88 contribute to the FMN site; these read SVS and MWNL.

The protein belongs to the azoreductase type 1 family. Homodimer. The cofactor is FMN.

It catalyses the reaction 2 a quinone + NADH + H(+) = 2 a 1,4-benzosemiquinone + NAD(+). It carries out the reaction N,N-dimethyl-1,4-phenylenediamine + anthranilate + 2 NAD(+) = 2-(4-dimethylaminophenyl)diazenylbenzoate + 2 NADH + 2 H(+). In terms of biological role, quinone reductase that provides resistance to thiol-specific stress caused by electrophilic quinones. Its function is as follows. Also exhibits azoreductase activity. Catalyzes the reductive cleavage of the azo bond in aromatic azo compounds to the corresponding amines. The chain is FMN-dependent NADH:quinone oxidoreductase 2 from Photobacterium profundum (strain SS9).